Here is a 97-residue protein sequence, read N- to C-terminus: Conotoxin Cal6.1b (97 aa).

A signal peptide spans 1–22 (MKLTTVLVVALLVLAACQFTVT). The tract at residues 22 to 46 (TDNSGDDPENPSLRSAGENQNPDST) is disordered. Residues 23 to 68 (DNSGDDPENPSLRSAGENQNPDSTKTITAWATRDMTNMRRGLNRPS) constitute a propeptide that is removed on maturation. Intrachain disulfides connect cysteine 71-cysteine 87, cysteine 78-cysteine 91, and cysteine 86-cysteine 96.

The protein belongs to the conotoxin O1 superfamily. In terms of tissue distribution, expressed by the venom duct.

It is found in the secreted. Its function is as follows. Probable neurotoxin with unknown target. Possibly targets ion channels. This Californiconus californicus (California cone) protein is Conotoxin Cal6.1b.